Consider the following 168-residue polypeptide: Gastrula zinc finger protein XlCGF42.1 (168 aa).

6 consecutive C2H2-type zinc fingers follow at residues 6–28 (YSCSDCGKCFTRRWNLSEHRKSH), 34–56 (FCCSVCGKGFSYHSQMKSHYRTH), 62–84 (CICSECGKSFTDHAGLRIHQKYH), 90–112 (FSCSECGKCFTRRSGLTAHLRIH), 118–140 (YTCTECGKCFTCRTDLARHLRIH), and 146–165 (FTCSQCEKSFASHSDLDRHH).

The protein belongs to the krueppel C2H2-type zinc-finger protein family.

Its subcellular location is the nucleus. May be involved in transcriptional regulation. This Xenopus laevis (African clawed frog) protein is Gastrula zinc finger protein XlCGF42.1.